Consider the following 252-residue polypeptide: Type III pantothenate kinase (252 aa).

6 to 13 (DVGNTHTT) is an ATP binding site. 104 to 107 (GADR) contributes to the substrate binding site. Aspartate 106 functions as the Proton acceptor in the catalytic mechanism. K(+) is bound at residue aspartate 126. Threonine 129 lines the ATP pocket. Threonine 180 contacts substrate.

It belongs to the type III pantothenate kinase family. As to quaternary structure, homodimer. NH4(+) is required as a cofactor. It depends on K(+) as a cofactor.

It is found in the cytoplasm. It carries out the reaction (R)-pantothenate + ATP = (R)-4'-phosphopantothenate + ADP + H(+). It participates in cofactor biosynthesis; coenzyme A biosynthesis; CoA from (R)-pantothenate: step 1/5. Catalyzes the phosphorylation of pantothenate (Pan), the first step in CoA biosynthesis. This is Type III pantothenate kinase from Fervidobacterium nodosum (strain ATCC 35602 / DSM 5306 / Rt17-B1).